Consider the following 505-residue polypeptide: ATP synthase subunit beta, mitochondrial (505 aa).

ATP is bound at residue 184–191 (GGAGVGKT).

Belongs to the ATPase alpha/beta chains family. As to quaternary structure, F-type ATPases have 2 components, CF(1) - the catalytic core - and CF(0) - the membrane proton channel. CF(1) has five subunits: alpha(3), beta(3), gamma(1), delta(1), epsilon(1). CF(0) has three main subunits: a, b and c.

The protein resides in the mitochondrion. Its subcellular location is the mitochondrion inner membrane. The catalysed reaction is ATP + H2O + 4 H(+)(in) = ADP + phosphate + 5 H(+)(out). In terms of biological role, mitochondrial membrane ATP synthase (F(1)F(0) ATP synthase or Complex V) produces ATP from ADP in the presence of a proton gradient across the membrane which is generated by electron transport complexes of the respiratory chain. F-type ATPases consist of two structural domains, F(1) - containing the extramembraneous catalytic core, and F(0) - containing the membrane proton channel, linked together by a central stalk and a peripheral stalk. During catalysis, ATP synthesis in the catalytic domain of F(1) is coupled via a rotary mechanism of the central stalk subunits to proton translocation. Subunits alpha and beta form the catalytic core in F(1). Rotation of the central stalk against the surrounding alpha(3)beta(3) subunits leads to hydrolysis of ATP in three separate catalytic sites on the beta subunits. The protein is ATP synthase subunit beta, mitochondrial (ATP2) of Kluyveromyces lactis (strain ATCC 8585 / CBS 2359 / DSM 70799 / NBRC 1267 / NRRL Y-1140 / WM37) (Yeast).